The sequence spans 285 residues: Probable ribosomal RNA small subunit methyltransferase A (285 aa).

Positions 29, 31, 58, 79, 107, and 122 each coordinate S-adenosyl-L-methionine.

It belongs to the class I-like SAM-binding methyltransferase superfamily. rRNA adenine N(6)-methyltransferase family. RsmA subfamily.

It is found in the cytoplasm. Functionally, specifically dimethylates two adjacent adenosines in the loop of a conserved hairpin near the 3'-end of 16S rRNA in the 30S particle. May play a critical role in biogenesis of 30S subunits. This chain is Probable ribosomal RNA small subunit methyltransferase A, found in Haloarcula marismortui (strain ATCC 43049 / DSM 3752 / JCM 8966 / VKM B-1809) (Halobacterium marismortui).